The sequence spans 425 residues: MKVLGVIVEYNPFHNGHLYHLQQAKKIVSPDYVIAIMSGNFCQRGEPAIINKFARAEIALKNGIDVVFELPTVYALQDAGGFAFGAITLLDKLTVVTDVVFGSESADKNFITTVAKTLLENPDKFDNLLKIELKKGLSFPNARKFALKKFLNENEDFLKMIENSNDILGIEYVKSILKLKSKINYHLIKRIGAKYNDTELESKYSSATAIRNAIVRNNPFETYVPQTSYKVLKREFSYGRGPVSLENMEQFILTFLRLKHRKDFESIYSFTEGLDQRFIKAIKTSKKLSDFLEKVKTKRFTYSRIRRAIFHALFDFKKEYIEFSNKLGTQYARILGFTKKGQKLLSKIKKASKIPIISNPSLHEKVLKKVLTDKDRKWEVNKKLFIWQFEKDIVASNIYTMFYPQKNERKYGLDFRKPIIEGENE.

Residues 7–20 (IVEY…HLYH), Gly-102, Asn-165, and 190–191 (RI) contribute to the ATP site.

This sequence belongs to the TmcAL family.

It is found in the cytoplasm. It carries out the reaction cytidine(34) in elongator tRNA(Met) + acetate + ATP = N(4)-acetylcytidine(34) in elongator tRNA(Met) + AMP + diphosphate. Catalyzes the formation of N(4)-acetylcytidine (ac(4)C) at the wobble position of elongator tRNA(Met), using acetate and ATP as substrates. First activates an acetate ion to form acetyladenylate (Ac-AMP) and then transfers the acetyl group to tRNA to form ac(4)C34. The polypeptide is tRNA(Met) cytidine acetate ligase (Thermosipho melanesiensis (strain DSM 12029 / CIP 104789 / BI429)).